The chain runs to 88 residues: Gas vesicle protein A2 (88 aa).

Belongs to the gas vesicle GvpA family. As to quaternary structure, the gas vesicle shell is 2 nm thick and consists of a single layer of this protein. It forms helical ribs nearly perpendicular to the long axis of the vesicle.

It is found in the gas vesicle shell. Functionally, gas vesicles are hollow, gas filled proteinaceous nanostructures found in some microorganisms. During planktonic growth they allow positioning of the organism at a favorable depth for light or nutrient acquisition. GvpA forms the protein shell. Its function is as follows. It is not clear if the 2 type A proteins in this organism are functionally redundant. When a minimal gvp locus (gvpA2-gvpR-gvpN-gvpF-gvpG-gvpL-gvpS-gvpK-gvpJ-gvpT-gvpU, called pNL29) is expressed in E.coli gas vesicles are made. The polypeptide is Gas vesicle protein A2 (Priestia megaterium (Bacillus megaterium)).